The primary structure comprises 331 residues: Inner membrane ABC transporter permease protein YjfF (331 aa).

Residues 1–5 (MIKRN) are Cytoplasmic-facing. A helical membrane pass occupies residues 6–26 (LPLMITIGVFVLGYLYCLTQF). Residues 27-42 (PGFASTRVICNILTDN) are Periplasmic-facing. The helical transmembrane segment at 43–63 (AFLGIIAVGMTFVILSGGIDL) threads the bilayer. At 64–88 (SVGSVIAFTGVFLAKVIGDFGLSPL) the chain is on the cytoplasmic side. Residues 89-109 (LAFPLVLVMGCAFGAFMGLLI) traverse the membrane as a helical segment. Over 110–113 (DALK) the chain is Periplasmic. A helical membrane pass occupies residues 114–134 (IPAFIITLAGMFFLRGVSYLV). Residues 135–159 (SEESIPINHPIYDTLSSLAWKIPGG) lie on the Cytoplasmic side of the membrane. A helical membrane pass occupies residues 160 to 180 (GRLSAMGLLMLAVVVIGIFLA). Over 181 to 222 (HRTRFGNQVYAIGGNATSANLMGISTRSTTIRIYMLSTGLAT) the chain is Periplasmic. A helical membrane pass occupies residues 223–243 (LAGIVFSIYTQAGYALAGVGV). The Cytoplasmic portion of the chain corresponds to 244-250 (ELDAIAS). The helical transmembrane segment at 251-271 (VVIGGTLLSGGVGTVLGTLFG) threads the bilayer. The Periplasmic segment spans residues 272–294 (VAIQGLIQTYINFDGTLSSWWTK). A helical transmembrane segment spans residues 295–315 (IAIGILLFIFIALQRGLTVLW). Residues 316 to 331 (ENRQSSPVTRVNIAQQ) are Cytoplasmic-facing.

The protein belongs to the binding-protein-dependent transport system permease family. AraH/RbsC subfamily. The complex is composed of two ATP-binding proteins (YtfR), two transmembrane proteins (YtfT and YjfF) and a solute-binding protein (YtfQ).

The protein localises to the cell inner membrane. In terms of biological role, part of the ABC transporter complex YtfQRT-YjfF involved in galactofuranose transport. Probably responsible for the translocation of the substrate across the membrane. In Escherichia coli (strain K12), this protein is Inner membrane ABC transporter permease protein YjfF (yjfF).